The sequence spans 347 residues: Beta carbonic anhydrase 1, chloroplastic (347 aa).

Residues 1–113 constitute a chloroplast transit peptide; it reads MSTAPLSGFF…AAAKVEQITA (113 aa). Alanine 114 carries the post-translational modification N-acetylalanine. Serine 175 carries the phosphoserine modification. Phosphotyrosine is present on tyrosine 203. Serine 266 is subject to Phosphoserine. Residue cysteine 280 is modified to S-nitrosocysteine.

Belongs to the beta-class carbonic anhydrase family. In terms of assembly, homohexamer. S-nitrosylation at Cys-280 is up-regulated during nitrosative burst and suppresses both binding of salicylic acid and carbonic anhydrase activity. S-nitrosylated in response to an avirulent but not to a virulent bacterial strain. Strongly expressed in aerial tissues including leaves, stems, flowers and siliques. Accumulates in both guard cells and mesophyll cells.

The protein localises to the plastid. It localises to the chloroplast stroma. Its subcellular location is the cell membrane. It carries out the reaction hydrogencarbonate + H(+) = CO2 + H2O. Reversible hydration of carbon dioxide. Required for photosynthesis in cotyledons. Binds salicylic acid. Together with BCA4, involved in the CO(2) signaling pathway which controls gas-exchange between plants and the atmosphere by modulating stomatal development and movements. Promotes water use efficiency. This is Beta carbonic anhydrase 1, chloroplastic from Arabidopsis thaliana (Mouse-ear cress).